The chain runs to 705 residues: Phosphoribosylformylglycinamidine synthase subunit PurL (705 aa).

His32 is an active-site residue. Tyr35 is a binding site for ATP. Glu76 serves as a coordination point for Mg(2+). Substrate-binding positions include 77-80 (SHNH) and Arg99. His78 serves as the catalytic Proton acceptor. Asp100 serves as a coordination point for Mg(2+). Gln224 contacts substrate. Position 252 (Asp252) interacts with Mg(2+). 296 to 298 (ESQ) lines the substrate pocket. The ATP site is built by Asp471 and Gly508. A Mg(2+)-binding site is contributed by Asn509. Position 511 (Ser511) interacts with substrate.

It belongs to the FGAMS family. In terms of assembly, monomer. Part of the FGAM synthase complex composed of 1 PurL, 1 PurQ and 2 PurS subunits.

The protein resides in the cytoplasm. It catalyses the reaction N(2)-formyl-N(1)-(5-phospho-beta-D-ribosyl)glycinamide + L-glutamine + ATP + H2O = 2-formamido-N(1)-(5-O-phospho-beta-D-ribosyl)acetamidine + L-glutamate + ADP + phosphate + H(+). The protein operates within purine metabolism; IMP biosynthesis via de novo pathway; 5-amino-1-(5-phospho-D-ribosyl)imidazole from N(2)-formyl-N(1)-(5-phospho-D-ribosyl)glycinamide: step 1/2. Functionally, part of the phosphoribosylformylglycinamidine synthase complex involved in the purines biosynthetic pathway. Catalyzes the ATP-dependent conversion of formylglycinamide ribonucleotide (FGAR) and glutamine to yield formylglycinamidine ribonucleotide (FGAM) and glutamate. The FGAM synthase complex is composed of three subunits. PurQ produces an ammonia molecule by converting glutamine to glutamate. PurL transfers the ammonia molecule to FGAR to form FGAM in an ATP-dependent manner. PurS interacts with PurQ and PurL and is thought to assist in the transfer of the ammonia molecule from PurQ to PurL. This Pyrococcus horikoshii (strain ATCC 700860 / DSM 12428 / JCM 9974 / NBRC 100139 / OT-3) protein is Phosphoribosylformylglycinamidine synthase subunit PurL.